A 90-amino-acid polypeptide reads, in one-letter code: UPF0237 protein MK1213 (90 aa).

Residues 5 to 79 (VVTVIGADRP…EELGVDVIVQ (75 aa)) enclose the ACT domain.

It belongs to the UPF0237 family.

This Methanopyrus kandleri (strain AV19 / DSM 6324 / JCM 9639 / NBRC 100938) protein is UPF0237 protein MK1213.